A 68-amino-acid polypeptide reads, in one-letter code: MDPETCPCPSGGSCTCADSCKCEGCKCTSCKKSCCSCCPAECEKCAKDCVCKGGEGAEAEAEKCSCCE.

Methionine 1 carries the N-acetylmethionine modification. The beta stretch occupies residues 1 to 30 (MDPETCPCPSGGSCTCADSCKCEGCKCTSC). A divalent metal cation contacts are provided by cysteine 6, cysteine 8, cysteine 14, cysteine 16, cysteine 20, cysteine 22, cysteine 25, cysteine 27, and cysteine 30. The tract at residues 31–68 (KKSCCSCCPAECEKCAKDCVCKGGEGAEAEAEKCSCCE) is alpha. A Phosphoserine modification is found at serine 33. A divalent metal cation contacts are provided by cysteine 34, cysteine 35, cysteine 37, cysteine 38, cysteine 42, cysteine 45, cysteine 49, cysteine 51, cysteine 64, cysteine 66, and cysteine 67.

It belongs to the metallothionein superfamily. Type 1 family.

Functionally, binds heavy metals. Contains five zinc and one copper atoms per polypeptide chain and only a negligible amount of cadmium. The chain is Metallothionein-3 (MT3) from Macaca fascicularis (Crab-eating macaque).